Reading from the N-terminus, the 307-residue chain is Solute carrier family 25 member 53 (307 aa).

Residues 1–23 form a disordered region; that stretch reads MGEQNHSPGKELQHRTRAEAPGK. Positions 8–22 are enriched in basic and acidic residues; it reads PGKELQHRTRAEAPG. Solcar repeat units lie at residues 25 to 105, 112 to 202, and 210 to 302; these read SWHS…LLCF, HTLG…IQDG, and HWVP…HSRK. The next 6 membrane-spanning stretches (helical) occupy residues 31 to 51, 82 to 102, 112 to 132, 181 to 201, 215 to 235, and 269 to 290; these read YALG…IYKV, YPPL…YDSL, HTLG…AVAL, VLAR…PIQD, LVSG…LIVL, and IYRG…TTAI.

It belongs to the mitochondrial carrier (TC 2.A.29) family.

The protein resides in the mitochondrion inner membrane. In Homo sapiens (Human), this protein is Solute carrier family 25 member 53 (SLC25A53).